Reading from the N-terminus, the 362-residue chain is MGFKCGIIGLPNVGKSTLFNVLTKGNSAVANFPFCTIKPNIGIVSVPDNRINNLSKIILPKKITNAFIEFVDIAGLVKGASKGEGLGNQFLSNIRDTHAIAHVVRCFKDDNVSHIYNQLQPKIDVDIINSELILADFETCEKSILKLQKKLNFNKKEIEEKLVVLSKCLDHLKKFLMLKTLELDENEKKIISYLRFLTLKPTMYIANINEQKESCFFLNELEKMAKKEGSSVIPINSNLELDLIKMNEDEQKYFMKSFNITNLGLNNIIKSGYKILNLITFFTAGIKEVRAWAIPNGSTSLQAADKIHSDFRRGFIRAQIINYLDFIKYKSETKVKEAGKYRSEGKFYQIQDGDIINFLFNV.

Residues 3-255 (FKCGIIGLPN…MNEDEQKYFM (253 aa)) enclose the OBG-type G domain. 12–17 (NVGKST) provides a ligand contact to ATP. Positions 16 and 36 each coordinate Mg(2+). Residues 277–360 (NLITFFTAGI…QDGDIINFLF (84 aa)) form the TGS domain.

It belongs to the TRAFAC class OBG-HflX-like GTPase superfamily. OBG GTPase family. YchF/OLA1 subfamily. It depends on Mg(2+) as a cofactor.

Functionally, ATPase that binds to both the 70S ribosome and the 50S ribosomal subunit in a nucleotide-independent manner. This is Ribosome-binding ATPase YchF from Buchnera aphidicola subsp. Schizaphis graminum (strain Sg).